Consider the following 414-residue polypeptide: HERV-H LTR-associating protein 2 (414 aa).

Positions 1–22 are cleaved as a signal peptide; that stretch reads MKAQTALSFFLILITSLSGSQG. Residues 61-131 form the Ig-like V-type 1 domain; sequence IHWKYQDSYK…YVGTAIQVIT (71 aa). Asn-90 and Asn-103 each carry an N-linked (GlcNAc...) asparagine glycan. Residues 138-222 enclose the Ig-like C1-type domain; that stretch reads VGVFLTPVMK…ENSLLKQTWT (85 aa). 2 cysteine pairs are disulfide-bonded: Cys-159-Cys-210 and Cys-243-Cys-317. An Ig-like V-type 2 domain is found at 235 to 328; it reads QSEHVSLSCQ…ISSDEYTLLT (94 aa). N-linked (GlcNAc...) asparagine glycosylation occurs at Asn-318. Residues 345 to 365 form a helical membrane-spanning segment; it reads KGLWILVPSAILAAFLLIWSV. A disordered region spans residues 383–414; that stretch reads GAQQERCCVPPGERCPSAPDNGEENVPLSGKV.

As to quaternary structure, interacts with TMIGD2. As to expression, expressed at high levels in colon, kidney, testis, lung and pancreas, and at lower levels in small intestine, liver and skeletal muscle. In immune cells, highly expressed in B-cells, dendritic cells and macrophages. Not detected in T-cells.

It localises to the membrane. Through interaction with TMIGD2, costimulates T-cells in the context of TCR-mediated activation. Enhances T-cell proliferation and cytokine production via an AKT-dependent signaling cascade. In Homo sapiens (Human), this protein is HERV-H LTR-associating protein 2 (HHLA2).